The following is a 280-amino-acid chain: SPX domain-containing protein 2 (280 aa).

Residues 1 to 162 (MKFGKSLSSQ…GSMIRLPFVQ (162 aa)) enclose the SPX domain. Disordered regions lie at residues 191–244 (PTNE…KSTV) and 257–280 (GSSTVSVFSLPPLHGSNGQDEPGR).

As to quaternary structure, interacts (via SPX domain) with PHR2 (via C-terminus). Interacts with RLI1 in the nucleus to prevents its positive regulation of leaf inclination during phosphate (Pi) starvation. Predominantly expressed in roots, leaves and seeds. Localized in leaves lamina joints.

Its subcellular location is the nucleus. Functionally, inhibits PHR2 DNA-binding activity via a phosphate (Pi)-dependent protein interaction. Together with SPX1, plays a negative role in the regulation of leaf inclination by preventing RLI1 transcription factor activity in Pi depleted conditions. This chain is SPX domain-containing protein 2, found in Oryza sativa subsp. japonica (Rice).